Here is a 284-residue protein sequence, read N- to C-terminus: Bifunctional protein FolD 2 (284 aa).

Residues 166–168 (GAS) and Ile-232 contribute to the NADP(+) site.

It belongs to the tetrahydrofolate dehydrogenase/cyclohydrolase family. In terms of assembly, homodimer.

The catalysed reaction is (6R)-5,10-methylene-5,6,7,8-tetrahydrofolate + NADP(+) = (6R)-5,10-methenyltetrahydrofolate + NADPH. It carries out the reaction (6R)-5,10-methenyltetrahydrofolate + H2O = (6R)-10-formyltetrahydrofolate + H(+). It functions in the pathway one-carbon metabolism; tetrahydrofolate interconversion. In terms of biological role, catalyzes the oxidation of 5,10-methylenetetrahydrofolate to 5,10-methenyltetrahydrofolate and then the hydrolysis of 5,10-methenyltetrahydrofolate to 10-formyltetrahydrofolate. In Pseudomonas putida (strain ATCC 47054 / DSM 6125 / CFBP 8728 / NCIMB 11950 / KT2440), this protein is Bifunctional protein FolD 2.